A 59-amino-acid polypeptide reads, in one-letter code: Large ribosomal subunit protein uL30 (59 aa).

This sequence belongs to the universal ribosomal protein uL30 family. Part of the 50S ribosomal subunit.

The polypeptide is Large ribosomal subunit protein uL30 (Macrococcus caseolyticus (strain JCSC5402) (Macrococcoides caseolyticum)).